The sequence spans 334 residues: Phosphate acyltransferase (334 aa).

This sequence belongs to the PlsX family. As to quaternary structure, homodimer. Probably interacts with PlsY.

The protein resides in the cytoplasm. It carries out the reaction a fatty acyl-[ACP] + phosphate = an acyl phosphate + holo-[ACP]. It participates in lipid metabolism; phospholipid metabolism. Its function is as follows. Catalyzes the reversible formation of acyl-phosphate (acyl-PO(4)) from acyl-[acyl-carrier-protein] (acyl-ACP). This enzyme utilizes acyl-ACP as fatty acyl donor, but not acyl-CoA. In Desulfitobacterium hafniense (strain DSM 10664 / DCB-2), this protein is Phosphate acyltransferase.